We begin with the raw amino-acid sequence, 54 residues long: Putative collagen-like domain-containing protein 065L (54 aa).

Positions 1–54 are disordered; it reads MRGLEAPGAVGPTGPSGAPGSQGPDGDVGGMGPEGPKGDDGPVGPKGPQGAAIF. Positions 7 to 51 constitute a Collagen-like domain; that stretch reads PGAVGPTGPSGAPGSQGPDGDVGGMGPEGPKGDDGPVGPKGPQGA. The segment covering 26-35 has biased composition (gly residues); that stretch reads GDVGGMGPEG. Residues 42–54 show a composition bias toward low complexity; the sequence is PVGPKGPQGAAIF.

The sequence is that of Putative collagen-like domain-containing protein 065L from Dryophytes versicolor (chameleon treefrog).